Here is a 281-residue protein sequence, read N- to C-terminus: NAD-dependent protein deacetylase 1 (281 aa).

The region spanning 1 to 281 (MEEGAALEGV…FDQILDALDL (281 aa)) is the Deacetylase sirtuin-type domain. Residues 24–44 (GAGV…GSLN) and 102–105 (QNVD) contribute to the NAD(+) site. His-120 serves as the catalytic Proton acceptor. Positions 128, 131, 183, and 186 each coordinate Zn(2+). NAD(+) contacts are provided by residues 224 to 226 (GSS), 250 to 252 (NGG), and Val-268.

Belongs to the sirtuin family. Class II subfamily. Requires Zn(2+) as cofactor.

The protein localises to the cytoplasm. It carries out the reaction N(6)-acetyl-L-lysyl-[protein] + NAD(+) + H2O = 2''-O-acetyl-ADP-D-ribose + nicotinamide + L-lysyl-[protein]. Its function is as follows. NAD-dependent protein deacetylase which modulates the activities of several enzymes which are inactive in their acetylated form. The chain is NAD-dependent protein deacetylase 1 from Corynebacterium efficiens (strain DSM 44549 / YS-314 / AJ 12310 / JCM 11189 / NBRC 100395).